A 258-amino-acid chain; its full sequence is Sugar fermentation stimulation protein homolog (258 aa).

Belongs to the SfsA family.

This is Sugar fermentation stimulation protein homolog from Prochlorococcus marinus (strain NATL2A).